The primary structure comprises 278 residues: ADP-dependent (S)-NAD(P)H-hydrate dehydratase (278 aa).

The YjeF C-terminal domain occupies 5 to 272 (TTEIVSRTII…TRIPTYMHRF (268 aa)). (6S)-NADPHX contacts are provided by A40, G103, and H152. Residue G214 participates in AMP binding. D215 contacts (6S)-NADPHX.

It belongs to the NnrD/CARKD family. In terms of assembly, homotetramer. Mg(2+) is required as a cofactor.

It catalyses the reaction (6S)-NADHX + ADP = AMP + phosphate + NADH + H(+). The enzyme catalyses (6S)-NADPHX + ADP = AMP + phosphate + NADPH + H(+). In terms of biological role, catalyzes the dehydration of the S-form of NAD(P)HX at the expense of ADP, which is converted to AMP. Together with NAD(P)HX epimerase, which catalyzes the epimerization of the S- and R-forms, the enzyme allows the repair of both epimers of NAD(P)HX, a damaged form of NAD(P)H that is a result of enzymatic or heat-dependent hydration. This Lactiplantibacillus plantarum (strain ATCC BAA-793 / NCIMB 8826 / WCFS1) (Lactobacillus plantarum) protein is ADP-dependent (S)-NAD(P)H-hydrate dehydratase.